The primary structure comprises 49 residues: Defensin Tk-AMP-D1 (49 aa).

Cystine bridges form between Cys3–Cys49, Cys14–Cys34, Cys20–Cys43, and Cys24–Cys45.

Its function is as follows. Has weak antifungal activity against F.graminearum and F.verticillioides below 30 ug/ml, but not against A.consortiale B.cinerea, H.sativum, F.culmorum, C.graminicola and D.maydis. The polypeptide is Defensin Tk-AMP-D1 (Triticum kiharae (Wheat)).